Here is a 59-residue protein sequence, read N- to C-terminus: Cecropin-A (59 aa).

A signal peptide spans Met1–Ala23. Leucine amide is present on Leu57.

Belongs to the cecropin family.

It is found in the secreted. Functionally, cecropins have lytic and antibacterial activity against several Gram-positive and Gram-negative bacteria. The protein is Cecropin-A (CECA) of Culex pipiens pipiens (Northern house mosquito).